The chain runs to 121 residues: Piercer of microtubule wall 2 protein (121 aa).

The segment covering 1-10 has biased composition (basic and acidic residues); sequence MTDRNRDKKS. Positions 1–29 are disordered; that stretch reads MTDRNRDKKSTSPSNSDTEMKSEQLPPCV.

The protein belongs to the PIERCE2 family. As to quaternary structure, microtubule inner protein component of sperm flagellar doublet microtubules. Interacts with CFAP53, ODAD1 and ODAD3; the interactions link the outer dynein arms docking complex (ODA-DC) to the internal microtubule inner proteins (MIP) in cilium axoneme. As to expression, expressed in airway epithelial cells.

It is found in the cytoplasm. The protein resides in the cytoskeleton. The protein localises to the cilium axoneme. Its subcellular location is the flagellum axoneme. Microtubule inner protein involved in the attachment of outer dynein arms (ODAs) to dynein-decorated doublet microtubules (DMTs) in cilia axoneme, which is required for motile cilia beating. This chain is Piercer of microtubule wall 2 protein, found in Homo sapiens (Human).